Reading from the N-terminus, the 427-residue chain is Serine protease inhibitor 88Ea (427 aa).

A signal peptide spans 1–18; the sequence is MHILSISLMAVLPAIALA. Asn224 carries N-linked (GlcNAc...) asparagine glycosylation.

The protein belongs to the serpin family. Expressed in nurse cells and oocytes. Expressed in wings.

The protein localises to the secreted. In terms of biological role, serine protease inhibitor with activity toward trypsin. Negatively regulates the Toll signaling pathway and suppresses the expression of the antifungal peptide drosomycin. Its negative regulation of the Toll signaling pathway also results in the inhibition of the melanization immune response via the phenoloxidase (PPO1) cascade. Essential for unfolding and expansion of the wings after emergence from the pupal case. May regulate the Toll pathway by blocking the proteolysis of the Toll ligand spz. This chain is Serine protease inhibitor 88Ea, found in Drosophila melanogaster (Fruit fly).